A 1132-amino-acid chain; its full sequence is Telomerase reverse transcriptase (1132 aa).

The segment at 1–230 is RNA-interacting domain 1; that stretch reads MPRAPRCRAV…ARRRGGSASR (230 aa). The tract at residues 58-197 is GQ motif; sequence VPWDARPPPA…PHASGPRRRL (140 aa). The interval 137 to 141 is required for regulating specificity for telomeric DNA and for processivity for primer elongation; sequence WGLLL. The interval 210–320 is disordered; it reads AGVPLGLPAP…SRPPRPWDTP (111 aa). Over residues 213 to 234 the composition is skewed to low complexity; the sequence is PLGLPAPGARRRGGSASRSLPL. Positions 222–240 match the Bipartite nuclear localization signal motif; that stretch reads RRRGGSASRSLPLPKRPRR. Ser227 carries the post-translational modification Phosphoserine; by PKB/AKT1. Residues 231-324 form a linker region; it reads SLPLPKRPRR…RPWDTPCPPV (94 aa). Basic residues predominate over residues 293-304; that stretch reads RHSHPSVGRQHH. The interval 301 to 538 is required for oligomerization; it reads RQHHAGPPST…VPAAEHRLRE (238 aa). Residues 310 to 320 show a composition bias toward pro residues; that stretch reads TSRPPRPWDTP. Residues 325 to 550 are RNA-interacting domain 2; it reads YAETKHFLYS…LAKFLHWLMS (226 aa). The short motif at 328 to 333 is the TFLY; involved in RNA binding element; sequence TKHFLY. The tract at residues 376 to 521 is QFP motif; it reads PRRLPRLPQR…MSVRDCAWLR (146 aa). Positions 397–417 are CP motif; sequence LGNHAQCPYGVLLKTHCPLRA. Ser457 is subject to Phosphoserine; by DYRK2. In terms of domain architecture, Reverse transcriptase spans 605 to 935; it reads EVRQHREARP…GLFPWCGLLL (331 aa). At Tyr707 the chain carries Phosphotyrosine; by SRC-type Tyr-kinases. Mg(2+) is bound by residues Asp712, Asp868, and Asp869. A required for oligomerization region spans residues 914 to 928; sequence LGGTAFVQMPAHGLF. Residues 930–934 are primer grip sequence; sequence WCGLL. The CTE stretch occupies residues 936–1132; that stretch reads DTRTLEVQSD…LPSDFKTILD (197 aa).

This sequence belongs to the reverse transcriptase family. Telomerase subfamily. Catalytic component of the telomerase holoenzyme complex composed of one molecule of TERT, one molecule of WRAP53/TCAB1, two molecules of H/ACA ribonucleoprotein complex subunits DKC1, NOP10, NHP2 and GAR1, and a telomerase RNA template component (TERC). The telomerase holoenzyme complex is associated with TEP1, SMG6/EST1A and POT1. The molecular chaperone HSP90/P23 complex is required for correct assembly and stabilization of the active telomerase. Interacts directly with HSP90A and PTGES3. Interacts with HSPA1A; the interaction occurs in the absence of TERC and dissociates once the complex has formed. Interacts with RAN; the interaction promotes nuclear export of TERT. Interacts with XPO1. Interacts with PTPN11; the interaction retains TERT in the nucleus. Interacts with NCL (via RRM1 and C-terminal RRM4/Arg/Gly-rich domains); the interaction is important for nucleolar localization of TERT. Interacts with SMARCA4 (via the bromodomain); the interaction regulates Wnt-mediated signaling. Interacts with MCRS1 (isoform MCRS2); the interaction inhibits in vitro telomerase activity. Interacts with PIF1; the interaction has no effect on the elongation activity of TERT. Interacts with PML; the interaction recruits TERT to PML bodies and inhibits telomerase activity. Interacts with GNL3L. Interacts with isoform 1 and isoform 2 of NVL. Interacts with DHX36. Interacts with ATF7. Phosphorylation at Tyr-707 under oxidative stress leads to translocation of TERT to the cytoplasm and reduces its antiapoptotic activity. Dephosphorylated by SHP2/PTPN11 leading to nuclear retention. Phosphorylation at Ser-227 by the AKT pathway promotes nuclear location. Phosphorylation at the G2/M phase at Ser-457 by DYRK2 promotes ubiquitination by the EDVP complex and degradation. Post-translationally, ubiquitinated by the EDVP complex, a E3 ligase complex following phosphorylation at Ser-457 by DYRK2. Ubiquitinated leads to proteasomal degradation. In terms of processing, (Microbial infection) In case of infection by HIV-1, the EDVP complex is hijacked by HIV-1 via interaction between HIV-1 Vpr and DCAF1/VPRBP, leading to ubiquitination and degradation. In terms of tissue distribution, expressed at a high level in thymocyte subpopulations, at an intermediate level in tonsil T-lymphocytes, and at a low to undetectable level in peripheral blood T-lymphocytes.

The protein localises to the nucleus. It localises to the nucleolus. The protein resides in the nucleoplasm. It is found in the chromosome. Its subcellular location is the telomere. The protein localises to the cytoplasm. It localises to the PML body. It carries out the reaction DNA(n) + a 2'-deoxyribonucleoside 5'-triphosphate = DNA(n+1) + diphosphate. In terms of biological role, telomerase is a ribonucleoprotein enzyme essential for the replication of chromosome termini in most eukaryotes. Active in progenitor and cancer cells. Inactive, or very low activity, in normal somatic cells. Catalytic component of the teleromerase holoenzyme complex whose main activity is the elongation of telomeres by acting as a reverse transcriptase that adds simple sequence repeats to chromosome ends by copying a template sequence within the RNA component of the enzyme. Catalyzes the RNA-dependent extension of 3'-chromosomal termini with the 6-nucleotide telomeric repeat unit, 5'-TTAGGG-3'. The catalytic cycle involves primer binding, primer extension and release of product once the template boundary has been reached or nascent product translocation followed by further extension. More active on substrates containing 2 or 3 telomeric repeats. Telomerase activity is regulated by a number of factors including telomerase complex-associated proteins, chaperones and polypeptide modifiers. Modulates Wnt signaling. Plays important roles in aging and antiapoptosis. The polypeptide is Telomerase reverse transcriptase (TERT) (Homo sapiens (Human)).